The following is a 101-amino-acid chain: Small ribosomal subunit protein uS14 (101 aa).

Residues 1–25 (MAKVSAIQKNKSRQKKSQRLHNKRS) are disordered. Residues 10 to 25 (NKSRQKKSQRLHNKRS) are compositionally biased toward basic residues.

This sequence belongs to the universal ribosomal protein uS14 family. As to quaternary structure, part of the 30S ribosomal subunit. Contacts proteins S3 and S10.

Binds 16S rRNA, required for the assembly of 30S particles and may also be responsible for determining the conformation of the 16S rRNA at the A site. This chain is Small ribosomal subunit protein uS14, found in Rickettsia typhi (strain ATCC VR-144 / Wilmington).